A 458-amino-acid polypeptide reads, in one-letter code: Tyrosine phenol-lyase (458 aa).

Position 258 is an N6-(pyridoxal phosphate)lysine (K258).

The protein belongs to the beta-eliminating lyase family. In terms of assembly, homotetramer. It depends on pyridoxal 5'-phosphate as a cofactor.

The enzyme catalyses L-tyrosine + H2O = phenol + pyruvate + NH4(+). This Symbiobacterium sp. (strain SC-1) protein is Tyrosine phenol-lyase (tpl).